We begin with the raw amino-acid sequence, 423 residues long: Tegument protein UL43 (423 aa).

A compositionally biased stretch (polar residues) spans 1–12 (MEKTPAETTAVS). Residues 1-46 (MEKTPAETTAVSAGNVPRDSIPCITNVSADTRGRTRPSRPATVPQR) form a disordered region.

This sequence belongs to the herpesviridae US22 family.

The protein localises to the virion tegument. This is Tegument protein UL43 (UL43) from Homo sapiens (Human).